Here is a 214-residue protein sequence, read N- to C-terminus: Non-structural protein NP-1 (214 aa).

Disordered stretches follow at residues Met-1 to Asn-85 and Glu-192 to Asn-214. Over residues Ser-33 to Gly-43 the composition is skewed to basic residues. The segment covering Glu-44–Gln-55 has biased composition (basic and acidic residues). A compositionally biased stretch (polar residues) spans Asp-56–Ala-71. Residues Glu-192–Met-201 are compositionally biased toward acidic residues.

The protein belongs to the Bocaparvovirus Non-structural protein NP-1 family.

The protein localises to the host nucleus. Functionally, required for the expression of the capsid proteins. Performs the splicing and internal polyadenylation of the viral capsid-encoding mRNA precursor, which allows its maturation and expression. Transactivates the viral promoter. The chain is Non-structural protein NP-1 (NP1) from Human bocavirus 4 (HBoV4).